The chain runs to 657 residues: Endoplasmic reticulum mannosyl-oligosaccharide 1,2-alpha-mannosidase (657 aa).

Over 1 to 49 the chain is Cytoplasmic; the sequence is MYPPPPAPAPHRDFISVTLSLGESYDNSKSRRRRSCWRKWKQLSRLQRN. The helical transmembrane segment at 50–70 threads the bilayer; that stretch reads VILFVLGFLILCGFLYSLQVS. At 71–657 the chain is on the lumenal side; that stretch reads DQWKALSGSR…AHPLPIWSPA (587 aa). S101 is subject to Phosphoserine. A disordered region spans residues 118–157; that stretch reads HLRRGPPHLQIRPPNTVSKDGMQDDAKEREAALGKAQQEE. Residues 138–157 are compositionally biased toward basic and acidic residues; it reads GMQDDAKEREAALGKAQQEE. E288 acts as the Proton donor in catalysis. D421 is a catalytic residue. Cysteines 485 and 514 form a disulfide. E528 functions as the Proton donor in the catalytic mechanism. The active site involves E557. A Ca(2+)-binding site is contributed by T646.

This sequence belongs to the glycosyl hydrolase 47 family. Ca(2+) is required as a cofactor.

The protein localises to the endoplasmic reticulum membrane. It catalyses the reaction N(4)-(alpha-D-Man-(1-&gt;2)-alpha-D-Man-(1-&gt;2)-alpha-D-Man-(1-&gt;3)-[alpha-D-Man-(1-&gt;2)-alpha-D-Man-(1-&gt;3)-[alpha-D-Man-(1-&gt;2)-alpha-D-Man-(1-&gt;6)]-alpha-D-Man-(1-&gt;6)]-beta-D-Man-(1-&gt;4)-beta-D-GlcNAc-(1-&gt;4)-beta-D-GlcNAc)-L-asparaginyl-[protein] (N-glucan mannose isomer 9A1,2,3B1,2,3) + 4 H2O = N(4)-(alpha-D-Man-(1-&gt;3)-[alpha-D-Man-(1-&gt;3)-[alpha-D-Man-(1-&gt;6)]-alpha-D-Man-(1-&gt;6)]-beta-D-Man-(1-&gt;4)-beta-D-GlcNAc-(1-&gt;4)-beta-D-GlcNAc)-L-asparaginyl-[protein] (N-glucan mannose isomer 5A1,2) + 4 beta-D-mannose. It carries out the reaction N(4)-(alpha-D-Man-(1-&gt;2)-alpha-D-Man-(1-&gt;2)-alpha-D-Man-(1-&gt;3)-[alpha-D-Man-(1-&gt;3)-[alpha-D-Man-(1-&gt;2)-alpha-D-Man-(1-&gt;6)]-alpha-D-Man-(1-&gt;6)]-beta-D-Man-(1-&gt;4)-beta-D-GlcNAc-(1-&gt;4)-beta-D-GlcNAc)-L-asparaginyl-[protein] (N-glucan mannose isomer 8A1,2,3B1,3) + 3 H2O = N(4)-(alpha-D-Man-(1-&gt;3)-[alpha-D-Man-(1-&gt;3)-[alpha-D-Man-(1-&gt;6)]-alpha-D-Man-(1-&gt;6)]-beta-D-Man-(1-&gt;4)-beta-D-GlcNAc-(1-&gt;4)-beta-D-GlcNAc)-L-asparaginyl-[protein] (N-glucan mannose isomer 5A1,2) + 3 beta-D-mannose. The protein operates within protein modification; protein glycosylation. Its function is as follows. Involved in glycoprotein quality control targeting of misfolded glycoproteins for degradation. It primarily trims a single alpha-1,2-linked mannose residue from Man(9)GlcNAc(2) to produce Man(8)GlcNAc(2), but at high enzyme concentrations, as found in the ER quality control compartment (ERQC), it further trims the carbohydrates to Man(5-6)GlcNAc(2). The chain is Endoplasmic reticulum mannosyl-oligosaccharide 1,2-alpha-mannosidase (Man1b1) from Rattus norvegicus (Rat).